Consider the following 270-residue polypeptide: Shikimate dehydrogenase (NADP(+)) (270 aa).

Residues 14 to 16 (SKS) and Thr-61 contribute to the shikimate site. Residue Lys-65 is the Proton acceptor of the active site. 2 residues coordinate shikimate: Asn-86 and Asp-101. NADP(+)-binding positions include 126 to 130 (GAGGA), 150 to 155 (NRTVDK), and Met-215. Tyr-217 serves as a coordination point for shikimate. Position 238 (Gly-238) interacts with NADP(+).

Belongs to the shikimate dehydrogenase family. As to quaternary structure, homodimer.

The enzyme catalyses shikimate + NADP(+) = 3-dehydroshikimate + NADPH + H(+). Its pathway is metabolic intermediate biosynthesis; chorismate biosynthesis; chorismate from D-erythrose 4-phosphate and phosphoenolpyruvate: step 4/7. Functionally, involved in the biosynthesis of the chorismate, which leads to the biosynthesis of aromatic amino acids. Catalyzes the reversible NADPH linked reduction of 3-dehydroshikimate (DHSA) to yield shikimate (SA). This chain is Shikimate dehydrogenase (NADP(+)), found in Methylobacillus flagellatus (strain ATCC 51484 / DSM 6875 / VKM B-1610 / KT).